We begin with the raw amino-acid sequence, 755 residues long: Polyribonucleotide nucleotidyltransferase (755 aa).

Asp-545 and Asp-551 together coordinate Mg(2+). Positions 611 to 670 (PRITAITVPVNKIGEVIGPKGKTINSITEETGANISIEEDGTVYVSAASGAAAEAAIEKI) constitute a KH domain. Residues 682–751 (GERFLGTVVK…NRGKISLAPV (70 aa)) form the S1 motif domain.

It belongs to the polyribonucleotide nucleotidyltransferase family. The cofactor is Mg(2+).

The protein resides in the cytoplasm. The catalysed reaction is RNA(n+1) + phosphate = RNA(n) + a ribonucleoside 5'-diphosphate. Involved in mRNA degradation. Catalyzes the phosphorolysis of single-stranded polyribonucleotides processively in the 3'- to 5'-direction. This Corynebacterium diphtheriae (strain ATCC 700971 / NCTC 13129 / Biotype gravis) protein is Polyribonucleotide nucleotidyltransferase.